Reading from the N-terminus, the 658-residue chain is DNA mismatch repair protein MutL (658 aa).

2 disordered regions span residues 114–137 (RQND…PTAA) and 437–456 (RFGN…PLSD). Residues 442–456 (PSETPAPQTDTPLSD) are compositionally biased toward polar residues.

Belongs to the DNA mismatch repair MutL/HexB family.

Its function is as follows. This protein is involved in the repair of mismatches in DNA. It is required for dam-dependent methyl-directed DNA mismatch repair. May act as a 'molecular matchmaker', a protein that promotes the formation of a stable complex between two or more DNA-binding proteins in an ATP-dependent manner without itself being part of a final effector complex. The protein is DNA mismatch repair protein MutL of Neisseria meningitidis serogroup B (strain ATCC BAA-335 / MC58).